Consider the following 161-residue polypeptide: 2-C-methyl-D-erythritol 2,4-cyclodiphosphate synthase (161 aa).

Residues aspartate 10 and histidine 12 each coordinate a divalent metal cation. 4-CDP-2-C-methyl-D-erythritol 2-phosphate-binding positions include 10–12 (DVH) and 36–37 (HS). Position 44 (histidine 44) interacts with a divalent metal cation. 4-CDP-2-C-methyl-D-erythritol 2-phosphate is bound by residues 58 to 60 (DIG), 63 to 67 (FPDTD), 102 to 108 (AQVPKMA), 134 to 137 (TTTE), phenylalanine 141, and arginine 144.

Belongs to the IspF family. As to quaternary structure, homotrimer. A divalent metal cation serves as cofactor.

The enzyme catalyses 4-CDP-2-C-methyl-D-erythritol 2-phosphate = 2-C-methyl-D-erythritol 2,4-cyclic diphosphate + CMP. It functions in the pathway isoprenoid biosynthesis; isopentenyl diphosphate biosynthesis via DXP pathway; isopentenyl diphosphate from 1-deoxy-D-xylulose 5-phosphate: step 4/6. Functionally, involved in the biosynthesis of isopentenyl diphosphate (IPP) and dimethylallyl diphosphate (DMAPP), two major building blocks of isoprenoid compounds. Catalyzes the conversion of 4-diphosphocytidyl-2-C-methyl-D-erythritol 2-phosphate (CDP-ME2P) to 2-C-methyl-D-erythritol 2,4-cyclodiphosphate (ME-CPP) with a corresponding release of cytidine 5-monophosphate (CMP). The sequence is that of 2-C-methyl-D-erythritol 2,4-cyclodiphosphate synthase from Shewanella baltica (strain OS223).